Reading from the N-terminus, the 131-residue chain is Histone H2B.1 (131 aa).

The segment covering 1 to 19 (MSAKAEKKPASKAPAEKKP) has biased composition (basic and acidic residues). The tract at residues 1 to 38 (MSAKAEKKPASKAPAEKKPAAKKTSTSTDGKKRSKARK) is disordered. Residues Lys7 and Lys8 each carry the N6-acetyllysine; alternate modification. Residues Lys7 and Lys8 each participate in a glycyl lysine isopeptide (Lys-Gly) (interchain with G-Cter in SUMO); alternate cross-link. A Phosphoserine modification is found at Ser11. An N6-acetyllysine modification is found at Lys12. Lys17, Lys18, Lys22, and Lys23 each carry N6-acetyllysine; alternate. Residues Lys17 and Lys18 each participate in a glycyl lysine isopeptide (Lys-Gly) (interchain with G-Cter in SUMO); alternate cross-link. The residue at position 22 (Lys22) is an N6-butyryllysine; alternate. Lys23 carries the N6-methyllysine; alternate modification. An N6-succinyllysine modification is found at Lys35. The residue at position 38 (Lys38) is an N6,N6-dimethyllysine. The residue at position 47 (Lys47) is an N6-succinyllysine. Residue Lys124 forms a Glycyl lysine isopeptide (Lys-Gly) (interchain with G-Cter in ubiquitin) linkage.

It belongs to the histone H2B family. In terms of assembly, the nucleosome is a histone octamer containing two molecules each of H2A, H2B, H3 and H4 assembled in one H3-H4 heterotetramer and two H2A-H2B heterodimers. The octamer wraps approximately 147 bp of DNA. Post-translationally, monoubiquitinated by the RAD6/UBC2-BRE1 complex to form H2BK123ub1. H2BK123ub1 gives a specific tag for epigenetic transcriptional activation and is also prerequisite for H3K4me and H3K79me formation. H2BK123ub1 also modulates the formation of double-strand breaks during meiosis and is a prerequisite for DNA-damage checkpoint activation. Deubiquitination is performed by UBP8 in presence of SGF11. Phosphorylated by STE20 to form H2BS10ph during progression through meiotic prophase. May be correlated with chromosome condensation. H2BS10ph is also formed after H(2)O(2) treatment, and is a step leading to apoptosis. In terms of processing, acetylated by GCN5, a component of the SAGA complex, to form H2BK11ac and H2BK16ac. H2BK16ac can also be formed by ESA1, a component of the NuA4 histone acetyltransferase (HAT) complex. Acetylation of N-terminal lysines and particularly formation of H2BK11acK16ac has a positive effect on transcription. Post-translationally, sumoylation to form H2BK6su or H2BK7su, and probably also H2BK16su or H2BK17su, occurs preferentially near the telomeres and represses gene transcription.

Its subcellular location is the nucleus. It is found in the chromosome. Its function is as follows. Core component of nucleosome. Nucleosomes wrap and compact DNA into chromatin, limiting DNA accessibility to the cellular machineries which require DNA as a template. Histones thereby play a central role in transcription regulation, DNA repair, DNA replication and chromosomal stability. DNA accessibility is regulated via a complex set of post-translational modifications of histones, also called histone code, and nucleosome remodeling. This Saccharomyces cerevisiae (strain ATCC 204508 / S288c) (Baker's yeast) protein is Histone H2B.1 (HTB1).